The primary structure comprises 342 residues: Methylthioribose-1-phosphate isomerase (342 aa).

Substrate contacts are provided by residues 44–46 (RGA), Arg85, and Gln192. Asp233 serves as the catalytic Proton donor. 243–244 (NK) is a substrate binding site.

It belongs to the eIF-2B alpha/beta/delta subunits family. MtnA subfamily.

The catalysed reaction is 5-(methylsulfanyl)-alpha-D-ribose 1-phosphate = 5-(methylsulfanyl)-D-ribulose 1-phosphate. It participates in amino-acid biosynthesis; L-methionine biosynthesis via salvage pathway; L-methionine from S-methyl-5-thio-alpha-D-ribose 1-phosphate: step 1/6. Its function is as follows. Catalyzes the interconversion of methylthioribose-1-phosphate (MTR-1-P) into methylthioribulose-1-phosphate (MTRu-1-P). The polypeptide is Methylthioribose-1-phosphate isomerase (Caldicellulosiruptor saccharolyticus (strain ATCC 43494 / DSM 8903 / Tp8T 6331)).